A 268-amino-acid polypeptide reads, in one-letter code: MADS-box protein FBP24 (268 aa).

The MADS-box domain occupies 4 to 64; the sequence is MGRGKIEVKR…GKLFEYCSQP (61 aa). One can recognise a K-box domain in the interval 88 to 178; it reads RVQLYDEVAK…YQWLMNNQMY (91 aa). The disordered stretch occupies residues 243–268; the sequence is NSISPYRLQPSHPNLQDSHVHGPSYD.

The protein localises to the nucleus. In terms of biological role, probable transcription factor. The chain is MADS-box protein FBP24 (FBP24) from Petunia hybrida (Petunia).